Consider the following 332-residue polypeptide: MDVQPLLKKLGEGKTLTVDEAYRLARGILLGELGEVEVAAALTAMSVRGETGEEVLGFVKMAREAAVRVPLEVDAIDTAGTGGDGAGTINLSTAAAIVAAAAGAKVLKHGNRSASGLFGSADFMEAVGYNLDLPPEKAARLVATVGFAFVFAPKYHPAFAKVAPVRRRLPFRTIFNVVGPLANPGCVKRQLVGVAEPRLLEVVGEALAGMGHVKALVVHGGGVDEVSTEGPTTVVEVRGFKLERYVVSPGDFGAPVTPLPRARSREEAVARALAGLRGEDREAAVAIAANAGFALYVADVVKDFRDGFELALKTIEEGAAYRKLVEAVEASR.

Residues G80, 83–84 (GD), T88, 90–93 (NLST), 108–116 (KHGNRSASG), and S120 contribute to the 5-phospho-alpha-D-ribose 1-diphosphate site. G80 is a binding site for anthranilate. S92 provides a ligand contact to Mg(2+). An anthranilate-binding site is contributed by N111. An anthranilate-binding site is contributed by R166. Mg(2+)-binding residues include D224 and E225.

The protein belongs to the anthranilate phosphoribosyltransferase family. As to quaternary structure, homodimer. Mg(2+) is required as a cofactor.

The catalysed reaction is N-(5-phospho-beta-D-ribosyl)anthranilate + diphosphate = 5-phospho-alpha-D-ribose 1-diphosphate + anthranilate. It functions in the pathway amino-acid biosynthesis; L-tryptophan biosynthesis; L-tryptophan from chorismate: step 2/5. Functionally, catalyzes the transfer of the phosphoribosyl group of 5-phosphorylribose-1-pyrophosphate (PRPP) to anthranilate to yield N-(5'-phosphoribosyl)-anthranilate (PRA). The sequence is that of Anthranilate phosphoribosyltransferase from Pyrobaculum calidifontis (strain DSM 21063 / JCM 11548 / VA1).